A 415-amino-acid chain; its full sequence is FXa-directed anticoagulant (415 aa).

The signal sequence occupies residues 1–17 (MYLKIVILVTFPLVCFT). Residues Asn117, Asn166, Asn216, and Asn320 are each glycosylated (N-linked (GlcNAc...) asparagine).

Belongs to the serpin family. In terms of assembly, (Microbial infection) Interacts with Zika virus envelope protein E and Zika virus-like particles; the interaction does not affect Zika virus replication in human endothelial cells and keratinocytes. The N-terminus is blocked. In terms of tissue distribution, female salivary gland (at protein level). Not detected in female carcass without head and salivary glands. Not detected in male tissues.

The protein resides in the secreted. In terms of biological role, anticoagulant serpin-type protein inhibiting host coagulation factor Xa (F10). Does not inhibit host thrombin (F2) and trypsin. Functionally, (Microbial infection) Does not affect Zika virus replication in human endothelial cells and keratinocytes. In Aedes aegypti (Yellowfever mosquito), this protein is FXa-directed anticoagulant.